Here is a 147-residue protein sequence, read N- to C-terminus: UPF0735 ACT domain-containing protein YszB (147 aa).

The ACT domain occupies 70–145 (TLFFHLEDRS…FVEKVEILGS (76 aa)).

Belongs to the UPF0735 family.

This is UPF0735 ACT domain-containing protein YszB (yszB) from Bacillus subtilis (strain 168).